A 137-amino-acid polypeptide reads, in one-letter code: Large ribosomal subunit protein uL22 (137 aa).

It belongs to the universal ribosomal protein uL22 family. As to quaternary structure, part of the 50S ribosomal subunit.

Functionally, this protein binds specifically to 23S rRNA; its binding is stimulated by other ribosomal proteins, e.g. L4, L17, and L20. It is important during the early stages of 50S assembly. It makes multiple contacts with different domains of the 23S rRNA in the assembled 50S subunit and ribosome. In terms of biological role, the globular domain of the protein is located near the polypeptide exit tunnel on the outside of the subunit, while an extended beta-hairpin is found that lines the wall of the exit tunnel in the center of the 70S ribosome. In Flavobacterium psychrophilum (strain ATCC 49511 / DSM 21280 / CIP 103535 / JIP02/86), this protein is Large ribosomal subunit protein uL22.